The primary structure comprises 357 residues: N-methyltransferase dtpB (357 aa).

Belongs to the methyltransferase superfamily.

It functions in the pathway alkaloid biosynthesis. Its function is as follows. N-methyltransferase; part of the gene cluster that mediates the biosynthesis of the dimeric diketopiperazine alkaloid ditryptophenaline. The nonribosomal peptide synthase dtpA accepts L-tryptophan and L-phenylalanine as its substrates and forms the phenylalanyl-tryptophanyl cyclic dipeptide product cyclophenylalanyltryptophenyl. The N-methyltransferase dtpB is responsible for the N-methylation of cyclophenylalanyltryptophenyl to yield cyclo-N-methylphenylalanyltryptophenyl. The cytochrome P450 monooxygenase is responsible not only for pyrroloindole ring formation but also for concurrent dimerization of N-methylphenylalanyltryptophanyl diketopiperazine monomers into a homodimeric product. The chain is N-methyltransferase dtpB from Aspergillus flavus (strain ATCC 200026 / FGSC A1120 / IAM 13836 / NRRL 3357 / JCM 12722 / SRRC 167).